Consider the following 955-residue polypeptide: Probable trehalose monomycolate exporter MmpL3 (955 aa).

Over 1–13 (MFAWWGRTVYRYR) the chain is Cytoplasmic. Residues 14–34 (FIVIGITVALCLCGGVFGLSL) traverse the membrane as a helical segment. The Periplasmic portion of the chain corresponds to 35-190 (GKHVTQSGFY…TIATDQRRME (156 aa)). Position 40–44 (40–44 (QSGFY)) interacts with a 1,2-diacylglycero-3-phosphoethanolamine. The helical transmembrane segment at 191–213 (VLALPLVAVVLFLVFGGVIAACL) threads the bilayer. The Cytoplasmic segment spans residues 214–219 (PVMVGG). A helical transmembrane segment spans residues 220–236 (LSIAGALGILRFIALFG). The Periplasmic portion of the chain corresponds to 237–244 (PVHFFAQP). A helical membrane pass occupies residues 245-262 (VVSLIGLGIAVDYGLFVV). Residues 263 to 291 (SRFREEIAEGYDTEAAVRRTVMTAGRTVT) are Cytoplasmic-facing. A helical transmembrane segment spans residues 292 to 312 (FSAVLIAASGASLLLLPQGFV). The Periplasmic segment spans residues 313 to 319 (KSLTYAL). The chain crosses the membrane as a helical span at residues 320–340 (IAAVTLAALLSITLLPACLAI). The Cytoplasmic segment spans residues 341-401 (LAKHVDALGV…KLVNFVMKRP (61 aa)). A helical transmembrane segment spans residues 402 to 422 (LVFAIPIVIGMILLVIPLGNL). The Periplasmic portion of the chain corresponds to 423-567 (SFGGMSEKYL…HSLVAQAPLM (145 aa)). Residues 568-588 (VIMLITTTMLLMFLAFGSFVL) form a helical membrane-spanning segment. Residues 589-591 (PIK) lie on the Cytoplasmic side of the membrane. Residues 592 to 612 (AAVMSALTLGSTMGILTWIFV) form a helical membrane-spanning segment. At 613 to 621 (DGHLSKWLN) the chain is on the periplasmic side. The chain crosses the membrane as a helical span at residues 622–642 (FTPTPLMVVIIALVVAVGYGL). Over 643–678 (ATDYEVFLVSRMVEARAESMSTQEAVRIGTASTGRL) the chain is Cytoplasmic. A helical transmembrane segment spans residues 679–699 (ITAAALVLAVVAGSFVFSDLV). Over 700–703 (MMKY) the chain is Periplasmic. A helical membrane pass occupies residues 704–724 (LAFGLMAALLLDATVVRMFLV). The Cytoplasmic segment spans residues 725–955 (PSVMKLLGDD…QDLLRREGRL (231 aa)). The tract at residues 759 to 955 (ERRRPTVSGR…QDLLRREGRL (197 aa)) is disordered. Composition is skewed to polar residues over residues 821–860 (GAST…SQGV) and 890–902 (NRSS…TAEP).

The protein belongs to the resistance-nodulation-cell division (RND) (TC 2.A.6) family. MmpL subfamily.

It localises to the cell inner membrane. Its subcellular location is the cell septum. It is found in the cell tip. Functionally, transports trehalose monomycolate (TMM) to the cell wall. Flips TMM across the inner membrane. Membrane potential is not required for this function. Transports probably phosphatidylethanolamine (PE) as well. Contributes to membrane potential, cell wall composition, antibiotic susceptibility and fitness. This chain is Probable trehalose monomycolate exporter MmpL3 (mmpL3), found in Mycobacterium leprae (strain TN).